The sequence spans 252 residues: UPF0736 protein OB1207 (252 aa).

This sequence belongs to the UPF0736 family.

The polypeptide is UPF0736 protein OB1207 (Oceanobacillus iheyensis (strain DSM 14371 / CIP 107618 / JCM 11309 / KCTC 3954 / HTE831)).